The following is a 119-amino-acid chain: uncharacterized protein (119 aa).

Positions 67–119 are disordered; sequence LGLKEVQKKSNEGLNEVQGVADINKQKRPANSQDSSSVEGDIQNFLEKVTGKN. The segment covering 95-104 has biased composition (polar residues); that stretch reads PANSQDSSSV.

This is an uncharacterized protein from Anabaena variabilis.